The chain runs to 503 residues: ATP synthase subunit alpha, chloroplastic (503 aa).

Residue 170–177 participates in ATP binding; sequence GDRQTGKT.

The protein belongs to the ATPase alpha/beta chains family. In terms of assembly, F-type ATPases have 2 components, CF(1) - the catalytic core - and CF(0) - the membrane proton channel. CF(1) has five subunits: alpha(3), beta(3), gamma(1), delta(1), epsilon(1). CF(0) has four main subunits: a, b, b' and c.

It localises to the plastid. It is found in the chloroplast thylakoid membrane. It carries out the reaction ATP + H2O + 4 H(+)(in) = ADP + phosphate + 5 H(+)(out). In terms of biological role, produces ATP from ADP in the presence of a proton gradient across the membrane. The alpha chain is a regulatory subunit. The sequence is that of ATP synthase subunit alpha, chloroplastic from Thalassiosira pseudonana (Marine diatom).